A 376-amino-acid polypeptide reads, in one-letter code: Lactosylceramide 1,3-N-acetyl-beta-D-glucosaminyltransferase (376 aa).

The Cytoplasmic segment spans residues 1–13 (MRLFVSRRVKRWK). Residues 14–34 (IFHFFVTCFILSFMVFWSPIN) traverse the membrane as a helical; Signal-anchor for type II membrane protein segment. The Lumenal portion of the chain corresponds to 35 to 376 (NYIMSHMKSY…NSYPCWAAFA (342 aa)). A glycan (N-linked (GlcNAc...) asparagine) is linked at asparagine 57.

It belongs to the glycosyltransferase 31 family. As to expression, highly expressed in adult spleen, placenta and cerebellar Purkinje cells where it colocalizes with HNK-1. Expressed at lower level in brain, lung, thymus and muscle.

Its subcellular location is the golgi apparatus membrane. The enzyme catalyses a beta-D-Gal-(1-&gt;4)-beta-D-Glc-(1&lt;-&gt;1)-Cer(d18:1(4E)) + UDP-N-acetyl-alpha-D-glucosamine = a beta-D-GlcNAc-(1-&gt;3)-beta-D-Gal-(1-&gt;4)-beta-D-Glc-(1&lt;-&gt;1)-Cer(d18:1(4E)) + UDP + H(+). It carries out the reaction a neolactoside nLc4Cer(d18:1(4E)) + UDP-N-acetyl-alpha-D-glucosamine = a neolactoside IV(3)-beta-GlcNAc-nLc4Cer(d18:1(4E)) + UDP + H(+). It participates in protein modification; protein glycosylation. Functionally, beta-1,3-N-acetylglucosaminyltransferase that plays a key role in the synthesis of lacto- or neolacto-series carbohydrate chains on glycolipids, notably by participating in biosynthesis of HNK-1 and Lewis X carbohydrate structures. Has strong activity toward lactosylceramide (LacCer) and neolactotetraosylceramide (nLc(4)Cer; paragloboside), resulting in the synthesis of Lc(3)Cer and neolactopentaosylceramide (nLc(5)Cer), respectively. Plays a central role in regulating neolacto-series glycolipid synthesis during embryonic development. This chain is Lactosylceramide 1,3-N-acetyl-beta-D-glucosaminyltransferase, found in Mus musculus (Mouse).